A 177-amino-acid chain; its full sequence is ATP synthase subunit delta (177 aa).

This sequence belongs to the ATPase delta chain family. F-type ATPases have 2 components, F(1) - the catalytic core - and F(0) - the membrane proton channel. F(1) has five subunits: alpha(3), beta(3), gamma(1), delta(1), epsilon(1). F(0) has three main subunits: a(1), b(2) and c(10-14). The alpha and beta chains form an alternating ring which encloses part of the gamma chain. F(1) is attached to F(0) by a central stalk formed by the gamma and epsilon chains, while a peripheral stalk is formed by the delta and b chains.

The protein localises to the cell inner membrane. Its function is as follows. F(1)F(0) ATP synthase produces ATP from ADP in the presence of a proton or sodium gradient. F-type ATPases consist of two structural domains, F(1) containing the extramembraneous catalytic core and F(0) containing the membrane proton channel, linked together by a central stalk and a peripheral stalk. During catalysis, ATP synthesis in the catalytic domain of F(1) is coupled via a rotary mechanism of the central stalk subunits to proton translocation. In terms of biological role, this protein is part of the stalk that links CF(0) to CF(1). It either transmits conformational changes from CF(0) to CF(1) or is implicated in proton conduction. The protein is ATP synthase subunit delta of Sulfurimonas denitrificans (strain ATCC 33889 / DSM 1251) (Thiomicrospira denitrificans (strain ATCC 33889 / DSM 1251)).